A 71-amino-acid polypeptide reads, in one-letter code: Large ribosomal subunit protein eL38 (71 aa).

It belongs to the eukaryotic ribosomal protein eL38 family.

The polypeptide is Large ribosomal subunit protein eL38 (RpL38) (Ixodes scapularis (Black-legged tick)).